We begin with the raw amino-acid sequence, 173 residues long: Dual-action ribosomal maturation protein DarP (173 aa).

This sequence belongs to the DarP family.

The protein localises to the cytoplasm. Member of a network of 50S ribosomal subunit biogenesis factors which assembles along the 30S-50S interface, preventing incorrect 23S rRNA structures from forming. Promotes peptidyl transferase center (PTC) maturation. The polypeptide is Dual-action ribosomal maturation protein DarP (Pseudomonas putida (strain ATCC 700007 / DSM 6899 / JCM 31910 / BCRC 17059 / LMG 24140 / F1)).